A 1691-amino-acid polypeptide reads, in one-letter code: Helicase SWR1 (1691 aa).

The interval 1 to 244 is disordered; it reads MPETASTANV…ATSNSTNRSP (244 aa). Composition is skewed to basic and acidic residues over residues 14-23 and 54-68; these read SDPDAIKTEQ and ENHH…DERP. A compositionally biased stretch (polar residues) spans 126-155; the sequence is LSKSRTSKRSTGANSNTKTEIHLTNGNSRK. The segment covering 232–243 has biased composition (low complexity); the sequence is SRTATSNSTNRS. An HSA domain is found at 335-409; sequence PEPAEEPPRQ…RAVWISRYRI (75 aa). Disordered regions lie at residues 457–615 and 628–801; these read QARQ…AGGL and MNSE…NHKI. Residues 467–521 show a composition bias toward acidic residues; that stretch reads QLSEEDGFDDLSDDMSMADDDELGLASGEDEDDEDGDADSDIMSSDEEEGDEEDQ. A compositionally biased stretch (low complexity) spans 564–575; it reads VDTAQATATENA. Acidic residues-rich tracts occupy residues 576–612 and 645–662; these read ETSD…DEDA and EMPD…EENE. Positions 671–692 are enriched in basic and acidic residues; that stretch reads PEPHESGALEKSTKEAVEEKEQ. Polar residues-rich tracts occupy residues 706 to 722 and 749 to 778; these read GLSN…SQDN and PATN…TAST. A Helicase ATP-binding domain is found at 823–988; sequence AGLYANSTNG…WSLLFFLMPA (166 aa). 836 to 843 is a binding site for ATP; that stretch reads DEMGLGKT. A DEAH box motif is present at residues 939-942; that stretch reads DEAH. The 151-residue stretch at 1375-1525 folds into the Helicase C-terminal domain; sequence ILDKLLRKLQ…DVVIQEGEFT (151 aa). 2 disordered regions span residues 1594 to 1632 and 1669 to 1691; these read EIQA…GGLD and DTKL…TRKR. Residues 1605-1618 show a composition bias toward polar residues; it reads KPSNNASGTSTARQ. The span at 1677-1691 shows a compositional bias: basic residues; sequence DKKKGKKKGKDTRKR.

It belongs to the SNF2/RAD54 helicase family. SWR1 subfamily. Component of the SWR1 chromatin-remodeling complex.

Its subcellular location is the nucleus. The catalysed reaction is ATP + H2O = ADP + phosphate + H(+). Catalytic component of the SWR1 complex which mediates the ATP-dependent exchange of histone H2A for the H2A variant HZT1 leading to transcriptional regulation of selected genes by chromatin remodeling. In Gibberella zeae (strain ATCC MYA-4620 / CBS 123657 / FGSC 9075 / NRRL 31084 / PH-1) (Wheat head blight fungus), this protein is Helicase SWR1 (SWR1).